The following is a 221-amino-acid chain: Deoxyribose-phosphate aldolase (221 aa).

Asp-90 functions as the Proton donor/acceptor in the catalytic mechanism. Lys-152 serves as the catalytic Schiff-base intermediate with acetaldehyde. Residue Lys-181 is the Proton donor/acceptor of the active site.

This sequence belongs to the DeoC/FbaB aldolase family. DeoC type 1 subfamily.

It is found in the cytoplasm. The enzyme catalyses 2-deoxy-D-ribose 5-phosphate = D-glyceraldehyde 3-phosphate + acetaldehyde. Its pathway is carbohydrate degradation; 2-deoxy-D-ribose 1-phosphate degradation; D-glyceraldehyde 3-phosphate and acetaldehyde from 2-deoxy-alpha-D-ribose 1-phosphate: step 2/2. In terms of biological role, catalyzes a reversible aldol reaction between acetaldehyde and D-glyceraldehyde 3-phosphate to generate 2-deoxy-D-ribose 5-phosphate. This chain is Deoxyribose-phosphate aldolase, found in Exiguobacterium sibiricum (strain DSM 17290 / CCUG 55495 / CIP 109462 / JCM 13490 / 255-15).